The chain runs to 178 residues: Large ribosomal subunit protein uL6 (178 aa).

It belongs to the universal ribosomal protein uL6 family. In terms of assembly, part of the 50S ribosomal subunit.

This protein binds to the 23S rRNA, and is important in its secondary structure. It is located near the subunit interface in the base of the L7/L12 stalk, and near the tRNA binding site of the peptidyltransferase center. This Corynebacterium aurimucosum (strain ATCC 700975 / DSM 44827 / CIP 107346 / CN-1) (Corynebacterium nigricans) protein is Large ribosomal subunit protein uL6.